We begin with the raw amino-acid sequence, 656 residues long: UV-damage endonuclease (656 aa).

7 disordered regions span residues 1–82, 119–146, 175–194, 241–264, 492–515, 550–620, and 636–656; these read MPSR…GKEQ, PSVV…KEPV, IIEP…RPPA, PLQF…EPQD, EPCD…TLPP, DMVP…GPYN, and KREV…EFDG. The segment covering 13-32 has biased composition (low complexity); that stretch reads TPQSESSTFSSTLDSSAPSP. 2 stretches are compositionally biased toward basic and acidic residues: residues 48 to 82 and 135 to 146; these read SEKD…GKEQ and TNAEEREAKEPV. The segment covering 550 to 561 has biased composition (basic and acidic residues); that stretch reads DMVPYDRDDENR. Residues 568-579 show a composition bias toward basic residues; that stretch reads APKKKKGGKRKR. Positions 583 to 595 are enriched in acidic residues; that stretch reads EEAAEPEEVDTAA. The segment covering 596-614 has biased composition (basic and acidic residues); the sequence is DDVKDAPEGPKEVPEEERA. Positions 647-656 are enriched in acidic residues; sequence EVEDEGEFDG.

Belongs to the uve1/UvsE family. The cofactor is Mg(2+).

Its function is as follows. Endonuclease for the repair of UV-irradiated DNA. Involved in the excision of cyclobutane pyrimidine dimers (CPD) and 6-4 pyrimidine pyrimidones (6-4PP) which forms the UV damage repair (UVDR) pathway. This is UV-damage endonuclease (mus-18) from Neurospora crassa (strain ATCC 24698 / 74-OR23-1A / CBS 708.71 / DSM 1257 / FGSC 987).